Here is a 450-residue protein sequence, read N- to C-terminus: 3-phosphoshikimate 1-carboxyvinyltransferase (450 aa).

Residues K23, S24, and R28 each contribute to the 3-phosphoshikimate site. K23 is a binding site for phosphoenolpyruvate. Phosphoenolpyruvate-binding residues include G96 and R124. 6 residues coordinate 3-phosphoshikimate: S167, S168, Q169, S196, E311, and H340. Q169 contributes to the phosphoenolpyruvate binding site. Catalysis depends on E311, which acts as the Proton acceptor. R344, R385, and K410 together coordinate phosphoenolpyruvate. The tract at residues 426 to 450 (GQGWGYPQPRSGQRARRATGQGSGG) is disordered.

This sequence belongs to the EPSP synthase family. As to quaternary structure, monomer.

The protein localises to the cytoplasm. It carries out the reaction 3-phosphoshikimate + phosphoenolpyruvate = 5-O-(1-carboxyvinyl)-3-phosphoshikimate + phosphate. It participates in metabolic intermediate biosynthesis; chorismate biosynthesis; chorismate from D-erythrose 4-phosphate and phosphoenolpyruvate: step 6/7. Catalyzes the transfer of the enolpyruvyl moiety of phosphoenolpyruvate (PEP) to the 5-hydroxyl of shikimate-3-phosphate (S3P) to produce enolpyruvyl shikimate-3-phosphate and inorganic phosphate. The sequence is that of 3-phosphoshikimate 1-carboxyvinyltransferase from Mycobacterium tuberculosis (strain ATCC 25177 / H37Ra).